Consider the following 211-residue polypeptide: Protein 33K (211 aa).

Disordered regions lie at residues 1–95 (MPPK…PCSL) and 107–140 (AGSP…QDSP). The segment covering 24–65 (DEEETWDDSQAEEVSDEEAEEQMESWDSLDEEDLEDVEEETI) has biased composition (acidic residues). Residues 83 to 92 (KTIPPLPPQP) are compositionally biased toward pro residues. Positions 129–140 (TSSAIATRQDSP) are enriched in polar residues. Positions 154 to 181 (YAIFQQSRGQQLELKVKNRSLRSLTRSC) are necessary for nuclear subcellular location. The tract at residues 160–180 (SRGQQLELKVKNRSLRSLTRS) is RS-repeat; required for splicing enhancer activity.

Belongs to the adenoviridae splicing factor family. In terms of assembly, homooligomer. Interacts with DBP; this interaction occurs at a unique vertex during genome packaging. Interacts with IVa2; this interaction occurs at a unique vertex during genome packaging and seems to potentiate IVa2 and 33K oligomerization. Phosphorylated in vitro by human PKA and PRKDC. PRKDC inhibits, whereas PKA activates the splicing factor.

It is found in the host nucleus. Its function is as follows. Promotes alternative splicing of late transcripts by promoting splicing at weak 3' splice sites. Required for the temporal activation of major late pre-mRNA splicing at late times of infection. Induces the splicing and expression of the late capsid vertex protein. In terms of biological role, probably functions as the small terminase that is part of the molecular motor that translocates genomic DNA in empty capsid during DNA packaging. This motor is located at a unique vertex and comprises at least the IVa2 ATPase, the small terminase 33K and probably a portal. Forms a ring-like structure of about 17 nm in which genomic DNA is translocated into the capsid. Stimulates IVa2 ATPase activity in the presence of the viral genome. Once the DNA is packaged, the terminase detaches: the 33K protein is present in the empty particles, but not in the mature virions. Also involved in virion assembly. The chain is Protein 33K from Human adenovirus F serotype 40 (HAdV-40).